The chain runs to 94 residues: Sapecin (94 aa).

Residues Met1–Ala23 form the signal peptide. The propeptide occupies Ser24–Arg54. 3 disulfide bridges follow: Cys57–Cys84, Cys70–Cys90, and Cys74–Cys92.

It belongs to the invertebrate defensin family. Type 1 subfamily. In terms of tissue distribution, hemocytes and fat body.

The protein resides in the secreted. Functionally, sapecins, which are potent bactericidal proteins, are produced in response to injury. Sapecin is cytotoxic to Gram-positive bacteria, and to a lesser extent against Gram-negative bacteria. The sequence is that of Sapecin from Sarcophaga peregrina (Flesh fly).